The chain runs to 282 residues: MANQLILLKKDFFTDEQQAVTVADRYPQDIFAEHTHEFCELVMVWRGNGLHVLNERPYRITRGDLFYIRAEDQHSYTSVNDLVLQNIIYCPERLKLNVNWQAMIPGFQGAQWHPHWRLGSMGMNQARQVINQLEHESNGRDPLANEMAELLFGQLVMTLKRHRYATDDLPATSRETLLDKLITALANSLECPFALDAFCQQEQCSERVLRQQFRAQTGMTINQYLRQVRICHAQYLLQHSPLMVSEISMQCGFEDSNYFSVVFTRETGMTPSQWRHLSNQSD.

In terms of domain architecture, HTH araC/xylS-type spans 179-277 (DKLITALANS…GMTPSQWRHL (99 aa)). 2 DNA-binding regions (H-T-H motif) span residues 196–217 (DAFCQQEQCSERVLRQQFRAQT) and 244–267 (VSEISMQCGFEDSNYFSVVFTRET).

Binds DNA as a dimer.

Its subcellular location is the cytoplasm. In terms of biological role, activates expression of the rhaSR operon in response to L-rhamnose. The sequence is that of HTH-type transcriptional activator RhaR from Salmonella choleraesuis (strain SC-B67).